Reading from the N-terminus, the 181-residue chain is Large ribosomal subunit protein uL5 (181 aa).

Belongs to the universal ribosomal protein uL5 family. In terms of assembly, part of the 50S ribosomal subunit; part of the 5S rRNA/L5/L18/L25 subcomplex. Contacts the 5S rRNA and the P site tRNA. Forms a bridge to the 30S subunit in the 70S ribosome.

Its function is as follows. This is one of the proteins that bind and probably mediate the attachment of the 5S RNA into the large ribosomal subunit, where it forms part of the central protuberance. In the 70S ribosome it contacts protein S13 of the 30S subunit (bridge B1b), connecting the 2 subunits; this bridge is implicated in subunit movement. Contacts the P site tRNA; the 5S rRNA and some of its associated proteins might help stabilize positioning of ribosome-bound tRNAs. The protein is Large ribosomal subunit protein uL5 of Helicobacter hepaticus (strain ATCC 51449 / 3B1).